The primary structure comprises 185 residues: Probable nicotinate-nucleotide adenylyltransferase (185 aa).

Belongs to the NadD family.

It catalyses the reaction nicotinate beta-D-ribonucleotide + ATP + H(+) = deamido-NAD(+) + diphosphate. Its pathway is cofactor biosynthesis; NAD(+) biosynthesis; deamido-NAD(+) from nicotinate D-ribonucleotide: step 1/1. Its function is as follows. Catalyzes the reversible adenylation of nicotinate mononucleotide (NaMN) to nicotinic acid adenine dinucleotide (NaAD). This Methylorubrum extorquens (strain PA1) (Methylobacterium extorquens) protein is Probable nicotinate-nucleotide adenylyltransferase.